A 57-amino-acid polypeptide reads, in one-letter code: MALDRVDRNIIEGKIDIIETAHIISSLGLERAESYSEMFEILGKTGIIVKNSLQNRF.

This is an uncharacterized protein from Archaeoglobus fulgidus (strain ATCC 49558 / DSM 4304 / JCM 9628 / NBRC 100126 / VC-16).